The primary structure comprises 155 residues: Endoribonuclease YbeY (155 aa).

3 residues coordinate Zn(2+): H117, H121, and H127.

Belongs to the endoribonuclease YbeY family. Requires Zn(2+) as cofactor.

It localises to the cytoplasm. Functionally, single strand-specific metallo-endoribonuclease involved in late-stage 70S ribosome quality control and in maturation of the 3' terminus of the 16S rRNA. In Treponema denticola (strain ATCC 35405 / DSM 14222 / CIP 103919 / JCM 8153 / KCTC 15104), this protein is Endoribonuclease YbeY.